A 383-amino-acid polypeptide reads, in one-letter code: Aliphatic nitrilase (383 aa).

A CN hydrolase domain is found at 13 to 288 (VKVATVQAEP…EGLLYAELDL (276 aa)). Glutamate 53 serves as the catalytic Proton acceptor. Residue lysine 136 is the Proton donor of the active site. Cysteine 170 acts as the Nucleophile in catalysis. Residues 359–383 (ATLPLDAPAPAPAPEQKSGRAKAEA) form a disordered region.

This sequence belongs to the carbon-nitrogen hydrolase superfamily. Nitrilase family.

The enzyme catalyses an aliphatic nitrile + 2 H2O = a carboxylate + NH4(+). In terms of biological role, acts on aliphatic nitriles such as acrylonitrile, crotononitrile and glutaronitrile. This is Aliphatic nitrilase from Rhodococcus rhodochrous.